The primary structure comprises 387 residues: ATP-dependent Clp protease proteolytic subunit-related protein 1, chloroplastic (387 aa).

The N-terminal 41 residues, 1-41 (MATALVSPLTSQLNHEAVCSKFVLPKSPFMSGSKLFSSNMP), are a transit peptide targeting the chloroplast. Over residues 355 to 365 (QDSSFEKRDYD) the composition is skewed to basic and acidic residues. Residues 355-387 (QDSSFEKRDYDGTLAQRAMRPGGGSPAAPAGLR) form a disordered region.

It belongs to the peptidase S14 family. Component of the chloroplastic Clp protease core complex which consist of at least 16 proteins: CLPP4 (3 copies), CLPP5 (3 copies), CLPR4 (2 copies), ClpP1 (1 copy), CLPP6 (1 copy), CLPR2 (1 copy), CLPT1 (1 copy), CLPT2 (1 copy) and 3 copies of CLPP3 and/or CLPR1 and/or CLPR3. The core complex is organized in two heptameric rings, one containing CLPP3,4,5,6 in a 1:2:3:1 ratio and the other CLPP1 and CLPR1,2,3,4 in a 3:1:1:1:1 ratio.

It localises to the plastid. Its subcellular location is the chloroplast stroma. Its function is as follows. Required for chloroplast development and differentiation. The sequence is that of ATP-dependent Clp protease proteolytic subunit-related protein 1, chloroplastic from Arabidopsis thaliana (Mouse-ear cress).